The following is a 550-amino-acid chain: Protein UshA (550 aa).

The first 25 residues, methionine 1–alanine 25, serve as a signal peptide directing secretion. Zn(2+) is bound by residues aspartate 41, histidine 43, aspartate 84, asparagine 116, histidine 217, histidine 252, and glutamine 254. A disulfide bond links cysteine 258 and cysteine 275. Substrate-binding positions include phenylalanine 429 and phenylalanine 498 to aspartate 504.

The protein belongs to the 5'-nucleotidase family. Monomer. It depends on Zn(2+) as a cofactor.

It localises to the periplasm. It catalyses the reaction UDP-sugar + H2O = UMP + alpha-D-aldose 1-phosphate.. The enzyme catalyses a ribonucleoside 5'-phosphate + H2O = a ribonucleoside + phosphate. In terms of biological role, degradation of external UDP-glucose to uridine monophosphate and glucose-1-phosphate, which can then be used by the cell. This chain is Protein UshA (ushA), found in Salmonella pullorum.